We begin with the raw amino-acid sequence, 61 residues long: Potassium channel toxin alpha-KTx 6.8 (61 aa).

Positions 1-23 (MNAKFILLLLVVTTTILLPDTQG) are cleaved as a signal peptide. 4 cysteine pairs are disulfide-bonded: C29–C50, C35–C55, C39–C57, and C45–C60. Residue C60 is modified to Cysteine amide.

It belongs to the short scorpion toxin superfamily. Potassium channel inhibitor family. Alpha-KTx 06 subfamily. As to expression, expressed by the venom gland.

It is found in the secreted. In terms of biological role, blocker of voltage-gated potassium channels. The chain is Potassium channel toxin alpha-KTx 6.8 from Opistophthalmus carinatus (African yellow leg scorpion).